The following is a 411-amino-acid chain: Solute carrier RCH1 (411 aa).

Over Met1 to Lys17 the chain is Cytoplasmic. A helical membrane pass occupies residues Val18 to Ala38. The Extracellular portion of the chain corresponds to His39–Arg52. A helical transmembrane segment spans residues Ala53–Met73. At Ser74–Phe89 the chain is on the cytoplasmic side. The helical transmembrane segment at Thr90–Ile110 threads the bilayer. The Extracellular portion of the chain corresponds to Lys111 to Asp120. Residues Trp121 to Val141 traverse the membrane as a helical segment. Over Met142 to Asp150 the chain is Cytoplasmic. A helical transmembrane segment spans residues Ile151–Leu171. The Extracellular portion of the chain corresponds to Leu172–Lys204. A helical membrane pass occupies residues Gln205–Pro225. The Cytoplasmic segment spans residues Lys226–Ser242. The helical transmembrane segment at Phe243–Thr263 threads the bilayer. Residues Ser264–Ser269 lie on the Extracellular side of the membrane. A helical transmembrane segment spans residues Ile270–Phe290. The Cytoplasmic portion of the chain corresponds to Tyr291–Asp329. Residues Thr330 to Ser350 traverse the membrane as a helical segment. Over Ser351–Gly361 the chain is Extracellular. A helical transmembrane segment spans residues Ile362–Val382. Over Ser383 to Lys411 the chain is Cytoplasmic.

The protein belongs to the bile acid:sodium symporter (BASS) (TC 2.A.28) family.

It is found in the cell membrane. It localises to the bud neck. Solute carrier protein that negatively regulates the cytosolic homeostasis in response to high levels of extracellular calcium. The polypeptide is Solute carrier RCH1 (Candida albicans (strain SC5314 / ATCC MYA-2876) (Yeast)).